A 432-amino-acid chain; its full sequence is MSTLIRIALFALALMAGAAQAADPLVISSGNDRAIPIAVVPFGFQGGNVLPEDMSNIIGNDLRNSGYFEPLPRQNMISQPAQASEVIFRDWKAVGVNYVMVGNIVPAGGRLQVQYALFDVGTEQQVLTGSVTGSTDQLRDMSHYIADQSFEKLTGIKGAFSTKMLYVTAERFSVDNTRYTLQRSDYDGARPVTLLQSREPIVSPRFSPDGRRIAYVSFEQKRPRIFIQYVDTGRREQITNFEGLNGAPAFSPDGNRLAFVLSRDGNPEIYVMDLGSRALRRLTNNLAIDTEPFWGKDGSTLYFTSDRGGKPQIYKMNVNSGAVDRVTFIGNYNANPKLSADEKTLVMVHRQQGYTNFQIAAQDLQRGNLRVLSNTTLDDSPTVAPNGTMLIYATRQQDRGVLMLVSINGRVRIPLPTAQGDVREPSWSPYLN.

The first 21 residues, 1–21 (MSTLIRIALFALALMAGAAQA), serve as a signal peptide directing secretion.

Belongs to the TolB family. As to quaternary structure, the Tol-Pal system is composed of five core proteins: the inner membrane proteins TolA, TolQ and TolR, the periplasmic protein TolB and the outer membrane protein Pal. They form a network linking the inner and outer membranes and the peptidoglycan layer.

It is found in the periplasm. Part of the Tol-Pal system, which plays a role in outer membrane invagination during cell division and is important for maintaining outer membrane integrity. This is Tol-Pal system protein TolB from Pseudomonas aeruginosa (strain ATCC 15692 / DSM 22644 / CIP 104116 / JCM 14847 / LMG 12228 / 1C / PRS 101 / PAO1).